We begin with the raw amino-acid sequence, 231 residues long: Large ribosomal subunit protein uL1 (231 aa).

It belongs to the universal ribosomal protein uL1 family. Part of the 50S ribosomal subunit.

In terms of biological role, binds directly to 23S rRNA. The L1 stalk is quite mobile in the ribosome, and is involved in E site tRNA release. Its function is as follows. Protein L1 is also a translational repressor protein, it controls the translation of the L11 operon by binding to its mRNA. In Stutzerimonas stutzeri (strain A1501) (Pseudomonas stutzeri), this protein is Large ribosomal subunit protein uL1.